Consider the following 90-residue polypeptide: MWGRQIVLKIFFLVLSCVIVIETERIDICFIPCTRRYGDYECWFDCTYNRYKEGGCVEDVVVKHNRNRPTFRAVELCFFSIKFMYDFSMK.

Positions 1–23 (MWGRQIVLKIFFLVLSCVIVIET) are cleaved as a signal peptide. Disulfide bonds link Cys33–Cys56 and Cys42–Cys77.

This sequence belongs to the DEFL family.

Its subcellular location is the secreted. The chain is Putative defensin-like protein 64 from Arabidopsis thaliana (Mouse-ear cress).